The following is a 58-amino-acid chain: Succinate dehydrogenase subunit 8A, mitochondrial (58 aa).

Component of complex II composed of eight subunits in plants: four classical SDH subunits SDH1, SDH2, SDH3 and SDH4 (a flavoprotein (FP), an iron-sulfur protein (IP), and a cytochrome b composed of a large and a small subunit.), as well as four subunits unknown in mitochondria from bacteria and heterotrophic eukaryotes.

The protein resides in the mitochondrion inner membrane. It participates in carbohydrate metabolism; tricarboxylic acid cycle. The protein is Succinate dehydrogenase subunit 8A, mitochondrial of Oryza sativa subsp. japonica (Rice).